Reading from the N-terminus, the 164-residue chain is Kunitz-type proteinase inhibitor BbCI (164 aa).

Belongs to the protease inhibitor I3 (leguminous Kunitz-type inhibitor) family.

The protein localises to the secreted. Its function is as follows. Inhibits T.cruzi cruzipain. This Bauhinia bauhinioides (Perlebia bauhinoides) protein is Kunitz-type proteinase inhibitor BbCI.